The following is a 1202-amino-acid chain: Nucleolar protein 6 (1202 aa).

A disordered region spans residues Met1–Lys64.

Belongs to the NRAP family. Part of the small subunit (SSU) processome, composed of more than 70 proteins and the RNA chaperone small nucleolar RNA (snoRNA) U3.

The protein resides in the nucleus. It localises to the nucleolus. It is found in the chromosome. Functionally, part of the small subunit (SSU) processome, first precursor of the small eukaryotic ribosomal subunit. During the assembly of the SSU processome in the nucleolus, many ribosome biogenesis factors, an RNA chaperone and ribosomal proteins associate with the nascent pre-rRNA and work in concert to generate RNA folding, modifications, rearrangements and cleavage as well as targeted degradation of pre-ribosomal RNA by the RNA exosome. The polypeptide is Nucleolar protein 6 (Drosophila willistoni (Fruit fly)).